Here is a 471-residue protein sequence, read N- to C-terminus: Ubiquitin carboxyl-terminal hydrolase calypso (471 aa).

Residues 45-276 (GWLELESDPG…IRFNLMAVVP (232 aa)) enclose the UCH catalytic domain. C131 (nucleophile) is an active-site residue. H213 acts as the Proton donor in catalysis. Residues 307 to 326 (DEQGESGNGDSQRPDTPTTL) form a disordered region. Over residues 314-326 (NGDSQRPDTPTTL) the composition is skewed to polar residues. In terms of domain architecture, ULD spans 375–403 (NYDKFICTFLSMLAHQGVLGELVSQHLLP). Residues 405 to 471 (KKVSGQGAAN…KGRNKCRKRK (67 aa)) are positively charged C-terminal tail required for binding nucleosomes. The interval 412–471 (AANRISKQSNTASAGGSTTGASASTPKTQQQQAAAAKNGKSPSKTPGRRRKGRNKCRKRK) is disordered. Over residues 422–447 (TASAGGSTTGASASTPKTQQQQAAAA) the composition is skewed to low complexity. Residues 457–471 (PGRRRKGRNKCRKRK) show a composition bias toward basic residues.

Belongs to the peptidase C12 family. BAP1 subfamily. Catalytic component of the polycomb repressive deubiquitinase (PR-DUB) complex, at least composed of caly/calypso, Asx and sba (MBD5/6 homolog). The PR-DUB complex associates with nucleosomes to mediate deubiquitination of histone H2AK118ub1 substrates; the association requires the positively charged C-terminal tail of caly, probably due to direct binding of DNA. Interacts (via ULD domain) with Asx (via DEUBAD domain); the interaction produces a stable heterodimer with a composite binding site for ubiquitin. Homodimerizes (via coiled-coil hinge-region between the UCH and ULD domains) to mediate assembly of 2 copies of the caly-Asx heterodimer into a bisymmetric tetramer; dimerization enhances PR-DUB association with nucleosomes.

Its subcellular location is the nucleus. It catalyses the reaction Thiol-dependent hydrolysis of ester, thioester, amide, peptide and isopeptide bonds formed by the C-terminal Gly of ubiquitin (a 76-residue protein attached to proteins as an intracellular targeting signal).. Catalytic component of the polycomb repressive deubiquitinase (PR-DUB) complex, a complex that specifically mediates deubiquitination of histone H2A monoubiquitinated at 'Lys-119' (H2AK118ub1). Mediates bisymmetric organization of the PR-DUB complex and is involved in association with nucleosomes to mediate deubiquitination. Does not deubiquitinate monoubiquitinated histone H2B. Required to maintain the transcriptionally repressive state of homeotic genes throughout development. The PR-DUB complex has weak or no activity toward 'Lys-48'- and 'Lys-63'-linked polyubiquitin chains. Polycomb group (PcG) protein. The chain is Ubiquitin carboxyl-terminal hydrolase calypso from Drosophila sechellia (Fruit fly).